The following is a 633-amino-acid chain: Chaperone protein HtpG (633 aa).

The a; substrate-binding stretch occupies residues 1 to 345 (MSADTQSETL…SDDLPLNISR (345 aa)). Positions 346–562 (EMLQHNPMIS…EYDFGMGMQR (217 aa)) are b. Residues 563 to 633 (LLQAAGHQLP…VRRVNNLLAG (71 aa)) form a c region.

This sequence belongs to the heat shock protein 90 family. Homodimer.

The protein localises to the cytoplasm. Its function is as follows. Molecular chaperone. Has ATPase activity. The sequence is that of Chaperone protein HtpG from Halorhodospira halophila (strain DSM 244 / SL1) (Ectothiorhodospira halophila (strain DSM 244 / SL1)).